The primary structure comprises 304 residues: uncharacterized protein (304 aa).

ATP is bound at residue 72–79 (GPTGSGKT).

This sequence belongs to the CbbQ/NirQ/NorQ/GpvN family.

This is an uncharacterized protein from Bacillus subtilis (strain 168).